The sequence spans 177 residues: uncharacterized protein (177 aa).

This is an uncharacterized protein from Azotobacter chroococcum mcd 1.